A 132-amino-acid chain; its full sequence is Pro-MCH 1 (132 aa).

The first 24 residues, 1-24, serve as a signal peptide directing secretion; sequence MRHSVLSISFAVALFLECYTPSTA. Cys-120 and Cys-129 form a disulfide bridge.

This sequence belongs to the melanin-concentrating hormone family. In terms of tissue distribution, pituitary gland. Produced in neurons of lateral basal hypothalamus which project both to the brain and to the neural lobe of the pituitary gland from where MCH is released.

Its function is as follows. Plays a role in skin pigmentation by antagonizing the action of melanotropin alpha. Induces melanin concentration within the melanophores. May participate in the control of the hypothalamo-pituitary adrenal gland axis by inhibiting the release of ACTH. The chain is Pro-MCH 1 (mch1) from Oncorhynchus mykiss (Rainbow trout).